Here is a 213-residue protein sequence, read N- to C-terminus: Phosphatidylserine decarboxylase proenzyme (213 aa).

Ser182 serves as the catalytic Schiff-base intermediate with substrate; via pyruvic acid. Position 182 is a pyruvic acid (Ser); by autocatalysis (Ser182).

It belongs to the phosphatidylserine decarboxylase family. PSD-A subfamily. In terms of assembly, heterodimer of a large membrane-associated beta subunit and a small pyruvoyl-containing alpha subunit. It depends on pyruvate as a cofactor. In terms of processing, is synthesized initially as an inactive proenzyme. Formation of the active enzyme involves a self-maturation process in which the active site pyruvoyl group is generated from an internal serine residue via an autocatalytic post-translational modification. Two non-identical subunits are generated from the proenzyme in this reaction, and the pyruvate is formed at the N-terminus of the alpha chain, which is derived from the carboxyl end of the proenzyme. The post-translation cleavage follows an unusual pathway, termed non-hydrolytic serinolysis, in which the side chain hydroxyl group of the serine supplies its oxygen atom to form the C-terminus of the beta chain, while the remainder of the serine residue undergoes an oxidative deamination to produce ammonia and the pyruvoyl prosthetic group on the alpha chain.

Its subcellular location is the cell membrane. It catalyses the reaction a 1,2-diacyl-sn-glycero-3-phospho-L-serine + H(+) = a 1,2-diacyl-sn-glycero-3-phosphoethanolamine + CO2. The protein operates within phospholipid metabolism; phosphatidylethanolamine biosynthesis; phosphatidylethanolamine from CDP-diacylglycerol: step 2/2. Catalyzes the formation of phosphatidylethanolamine (PtdEtn) from phosphatidylserine (PtdSer). In Geotalea uraniireducens (strain Rf4) (Geobacter uraniireducens), this protein is Phosphatidylserine decarboxylase proenzyme.